Here is a 1431-residue protein sequence, read N- to C-terminus: DNA polymerase II large subunit (1431 aa).

The tract at residues 1388–1431 is disordered; that stretch reads LLENFANGYNKGKKEEMPKKQRKKEQEKSKKRKVISLDDFFSRK. Basic and acidic residues predominate over residues 1399 to 1415; it reads GKKEEMPKKQRKKEQEK.

It belongs to the archaeal DNA polymerase II family. Heterodimer of a large subunit and a small subunit. In terms of processing, this protein undergoes a protein self splicing that involves a post-translational excision of the intervening region (intein) followed by peptide ligation.

It catalyses the reaction DNA(n) + a 2'-deoxyribonucleoside 5'-triphosphate = DNA(n+1) + diphosphate. The enzyme catalyses Exonucleolytic cleavage in the 3'- to 5'-direction to yield nucleoside 5'-phosphates.. Functionally, possesses two activities: a DNA synthesis (polymerase) and an exonucleolytic activity that degrades single-stranded DNA in the 3'- to 5'-direction. Has a template-primer preference which is characteristic of a replicative DNA polymerase. This Pyrococcus horikoshii (strain ATCC 700860 / DSM 12428 / JCM 9974 / NBRC 100139 / OT-3) protein is DNA polymerase II large subunit (polC).